The following is a 433-amino-acid chain: Type I acyl-CoA thioesterase mpaH (433 aa).

The tract at residues 58–246 (HGVGLPKELY…VKARFDAAAD (189 aa)) is abhydrolase domain. Val60 serves as a coordination point for substrate. The active-site Nucleophile is Ser139. Phe140 contributes to the substrate binding site. Active-site residues include Asp163 and His365.

This sequence belongs to the AB hydrolase superfamily. MpaH hydrolase family. As to quaternary structure, homodimer.

Its subcellular location is the peroxisome matrix. It carries out the reaction mycophenolyl-CoA + H2O = mycophenolate + CoA + H(+). The protein operates within secondary metabolite biosynthesis; terpenoid biosynthesis. Type I acyl-CoA thioesterase; part of the gene cluster that mediates the biosynthesis of mycophenolic acid (MPA), the first isolated antibiotic natural product in the world obtained from a culture of Penicillium brevicompactum in 1893. MpaH acts as a peroxisomal acyl-CoA hydrolase that converts MPA-CoA into the final product MPA. The first step of the pathway is the synthesis of 5-methylorsellinic acid (5MOA) by the cytosolic polyketide synthase mpaC. 5MOA is then converted to the phthalide compound 5,7-dihydroxy-4,6-dimethylphthalide (DHMP) by the endoplasmic reticulum-bound cytochrome P450 monooxygenase mpaDE. MpaDE first catalyzes hydroxylation of 5-MOA to 4,6-dihydroxy-2-(hydroxymethyl)-3-methylbenzoic acid (DHMB). MpaDE then acts as a lactone synthase that catalyzes the ring closure to convert DHMB into DHMP. The next step is the prenylation of DHMP by the Golgi apparatus-associated prenyltransferase mpaA to yield farnesyl-DHMP (FDHMP). The ER-bound oxygenase mpaB then mediates the oxidative cleavage the C19-C20 double bond in FDHMP to yield FDHMP-3C via a mycophenolic aldehyde intermediate. The O-methyltransferase mpaG catalyzes the methylation of FDHMP-3C to yield MFDHMP-3C. After the cytosolic methylation of FDHMP-3C, MFDHMP-3C enters into peroxisomes probably via free diffusion due to its low molecular weight. Upon a peroxisomal CoA ligation reaction, catalyzed by a beta-oxidation component enzyme acyl-CoA ligase ACL891, MFDHMP-3C-CoA would then be restricted to peroxisomes for the following beta-oxidation pathway steps. The peroxisomal beta-oxidation machinery than converts MFDHMP-3C-CoA into MPA_CoA, via a beta-oxidation chain-shortening process. Finally mpaH acts as a peroxisomal acyl-CoA hydrolase with high substrate specificity toward MPA-CoA to release the final product MPA. In Penicillium roqueforti (strain FM164), this protein is Type I acyl-CoA thioesterase mpaH.